The primary structure comprises 257 residues: Diphthine synthase (257 aa).

Residues L9, D86, V89, 114 to 115 (SI), L166, A207, and H232 contribute to the S-adenosyl-L-methionine site.

Belongs to the diphthine synthase family. Homodimer.

The enzyme catalyses 2-[(3S)-amino-3-carboxypropyl]-L-histidyl-[translation elongation factor 2] + 3 S-adenosyl-L-methionine = diphthine-[translation elongation factor 2] + 3 S-adenosyl-L-homocysteine + 3 H(+). It participates in protein modification; peptidyl-diphthamide biosynthesis. S-adenosyl-L-methionine-dependent methyltransferase that catalyzes the trimethylation of the amino group of the modified target histidine residue in translation elongation factor 2 (EF-2), to form an intermediate called diphthine. The three successive methylation reactions represent the second step of diphthamide biosynthesis. This is Diphthine synthase from Methanocella arvoryzae (strain DSM 22066 / NBRC 105507 / MRE50).